The following is a 211-amino-acid chain: Prolactin-3C1 (211 aa).

The signal sequence occupies residues 1–29 (MQLSLTQARTWKGLLLLVSCMILWISVTP). N-linked (GlcNAc...) asparagine glycosylation is found at Asn-77 and Asn-173. A disulfide bridge connects residues Cys-80 and Cys-187.

It belongs to the somatotropin/prolactin family. Expressed exclusively in decidual tissue.

The protein resides in the secreted. The sequence is that of Prolactin-3C1 (Prl3c1) from Rattus norvegicus (Rat).